The following is a 481-amino-acid chain: Glutamate--tRNA ligase (481 aa).

The 'HIGH' region motif lies at Pro-11–Asn-21. The 'KMSKS' region motif lies at Lys-255–Arg-259. Position 258 (Lys-258) interacts with ATP.

Belongs to the class-I aminoacyl-tRNA synthetase family. Glutamate--tRNA ligase type 1 subfamily. Monomer.

It localises to the cytoplasm. The catalysed reaction is tRNA(Glu) + L-glutamate + ATP = L-glutamyl-tRNA(Glu) + AMP + diphosphate. Its function is as follows. Catalyzes the attachment of glutamate to tRNA(Glu) in a two-step reaction: glutamate is first activated by ATP to form Glu-AMP and then transferred to the acceptor end of tRNA(Glu). The sequence is that of Glutamate--tRNA ligase from Streptococcus pyogenes serotype M6 (strain ATCC BAA-946 / MGAS10394).